Reading from the N-terminus, the 271-residue chain is MRIALGIEYDGSGFAGWQWQNGKRTIQAEVERALSRVADAPVRVTCAGRTDAGVHAIEQVAHFDTESRRSERSWLLGANTALPEDVRILWVRETEPHFHARLSAIARYYRYEILNRPMRSALRPRQFTWCHAPLDVERMREGAAYLVGEHDFSSFRAQQCQSRSPFRRVHFLHVRREGERVIMEIAANAFVHHMVRNIAGVLMAVGAGKRDPAWVGELLAMRDRAKGGVTAPPDGLYLGGVCYPEEFGLARDAVFEHLPADARRYQPDDES.

D51 (nucleophile) is an active-site residue. Y109 lines the substrate pocket.

The protein belongs to the tRNA pseudouridine synthase TruA family. Homodimer.

It catalyses the reaction uridine(38/39/40) in tRNA = pseudouridine(38/39/40) in tRNA. Its function is as follows. Formation of pseudouridine at positions 38, 39 and 40 in the anticodon stem and loop of transfer RNAs. The sequence is that of tRNA pseudouridine synthase A from Methylococcus capsulatus (strain ATCC 33009 / NCIMB 11132 / Bath).